Consider the following 196-residue polypeptide: MTRFILASGSQIRADILRQAHIPFEIIKSDVDESVIKAERADLSPRDMALCLAEAKVEPVSLAHPDALVLGADQTMELDGELLDKLPQASLARARLERMRGRPHFLHSGLALLRAGQPVWRYQQTSTIHVRGFSDAFLDQYLENAGFALTASVGAYAYEGLGSQLFERVEGDYYAILGLPLLPLTAVLRDHGVLQQ.

Catalysis depends on aspartate 73, which acts as the Proton acceptor.

Belongs to the Maf family. Requires a divalent metal cation as cofactor.

It localises to the cytoplasm. The catalysed reaction is a ribonucleoside 5'-triphosphate + H2O = a ribonucleoside 5'-phosphate + diphosphate + H(+). It catalyses the reaction a 2'-deoxyribonucleoside 5'-triphosphate + H2O = a 2'-deoxyribonucleoside 5'-phosphate + diphosphate + H(+). Nucleoside triphosphate pyrophosphatase. May have a dual role in cell division arrest and in preventing the incorporation of modified nucleotides into cellular nucleic acids. The sequence is that of Nucleoside triphosphate pyrophosphatase from Maricaulis maris (strain MCS10) (Caulobacter maris).